The primary structure comprises 710 residues: Adenylosuccinate synthetase (710 aa).

Disordered regions lie at residues 1-51 (MPVR…PVPQ) and 84-111 (DEPP…GRSK). Polar residues-rich tracts occupy residues 10-27 (YNNS…STTA) and 101-111 (ANASSSSGRSK). GTP-binding positions include 180–186 (GDEGKGK) and 210–212 (GHT). Residue Asp181 is the Proton acceptor of the active site. Mg(2+) contacts are provided by Asp181 and Gly210. Residues 181 to 184 (DEGK), 208 to 211 (NAGH), Thr295, Lys309, Gln421, Thr437, and Lys567 contribute to the IMP site. The Proton donor role is filled by His211. 563–569 (AVTKKPR) provides a ligand contact to substrate. Residues Arg569 and 697–699 (GNG) contribute to the GTP site.

It belongs to the adenylosuccinate synthetase family. As to quaternary structure, homodimer. Mg(2+) serves as cofactor.

It localises to the cytoplasm. It carries out the reaction IMP + L-aspartate + GTP = N(6)-(1,2-dicarboxyethyl)-AMP + GDP + phosphate + 2 H(+). It participates in purine metabolism; AMP biosynthesis via de novo pathway; AMP from IMP: step 1/2. Plays an important role in the salvage pathway for purine nucleotide biosynthesis. Catalyzes the first committed step in the biosynthesis of AMP from IMP. The polypeptide is Adenylosuccinate synthetase (Leishmania infantum).